We begin with the raw amino-acid sequence, 166 residues long: Regulatory protein RecX (166 aa).

The protein belongs to the RecX family.

The protein localises to the cytoplasm. In terms of biological role, modulates RecA activity. The protein is Regulatory protein RecX of Shigella boydii serotype 18 (strain CDC 3083-94 / BS512).